A 325-amino-acid polypeptide reads, in one-letter code: Deoxyhypusine hydroxylase (325 aa).

Ser2 is modified (N-acetylserine). HEAT-like PBS-type repeat units follow at residues 77-103 and 110-136; these read LKHE…VMLD and VRHE…AAKE. Fe cation is bound by residues His79, Glu80, His112, and Glu113. Ser126 carries the post-translational modification Phosphoserine. Thr187 carries the post-translational modification Phosphothreonine. 3 HEAT-like PBS-type repeats span residues 202 to 231, 235 to 261, and 268 to 294; these read LFQR…FSAE, FKHE…VLGR, and VRHE…YLND. 4 residues coordinate Fe cation: His237, Glu238, His270, and Glu271. Ser281 bears the Phosphoserine mark.

Belongs to the deoxyhypusine hydroxylase family. It depends on Fe(2+) as a cofactor.

It localises to the cytoplasm. Its subcellular location is the nucleus. It carries out the reaction [eIF5A protein]-deoxyhypusine + AH2 + O2 = [eIF5A protein]-hypusine + A + H2O. It participates in protein modification; eIF5A hypusination. In terms of biological role, catalyzes the hydroxylation of the N(6)-(4-aminobutyl)-L-lysine intermediate to form hypusine, an essential post-translational modification only found in mature eIF-5A factor. This chain is Deoxyhypusine hydroxylase, found in Saccharomyces cerevisiae (strain ATCC 204508 / S288c) (Baker's yeast).